The sequence spans 61 residues: Large ribosomal subunit protein eL37 (61 aa).

Zn(2+) is bound by residues Cys-19, Cys-22, Cys-34, and Cys-37. The C4-type zinc-finger motif lies at 19–37 (CRRCGRNSFNARKGYCAAC).

Belongs to the eukaryotic ribosomal protein eL37 family. Zn(2+) serves as cofactor.

Its function is as follows. Binds to the 23S rRNA. The sequence is that of Large ribosomal subunit protein eL37 from Sulfolobus acidocaldarius (strain ATCC 33909 / DSM 639 / JCM 8929 / NBRC 15157 / NCIMB 11770).